We begin with the raw amino-acid sequence, 527 residues long: Serine/threonine-protein kinase NLK (527 aa).

Sufficient for interaction with DAPK3 stretches follow at residues 1–125 (MSLC…KAHH) and 124–416 (HHHQ…SKRI). Required for interaction with TAB2 regions lie at residues 1–304 (MSLC…VVTQ) and 434–527 (YHTC…LVWE). Disordered regions lie at residues 22 to 72 (AAAA…SSAA) and 90 to 140 (QQPY…DIEP). Residues 26–54 (GHHHHHHHHLPHLPPPHLHHHHHPQHHLH) are compositionally biased toward basic residues. Low complexity predominate over residues 103–119 (PGPAAAAPAQVQAAAAA). Positions 122–131 (KAHHHQHSHH) are enriched in basic residues. The region spanning 138 to 427 (IEPDRPIGYG…AKDALAHPYL (290 aa)) is the Protein kinase domain. ATP is bound by residues 144-152 (IGYGAFGVV) and Lys-167. Catalysis depends on Asp-264, which acts as the Proton acceptor. A Phosphothreonine; by autocatalysis modification is found at Thr-298. The TQE signature appears at 298-300 (TQE). The interval 428–527 (DEGRLRYHTC…EMPPSPLVWE (100 aa)) is required for homodimerization and kinase activation and localization to the nucleus. Position 522 is a phosphoserine (Ser-522).

Belongs to the protein kinase superfamily. CMGC Ser/Thr protein kinase family. MAP kinase subfamily. Homodimer. Homodimerization is required for intermolecular autophosphorylation, kinase activation and nuclear localization. May interact with components of cullin-RING-based SCF (SKP1-CUL1-F-box protein) E3 ubiquitin-protein ligase complexes. Interacts with LEF1, MEF2A, MYBL1 and MYBL2. Interacts with the upstream activating kinases HIPK2 and MAP3K7/TAK1. Interaction with MAP3K7/TAK1 seems to be indirect, and may be mediated by other proteins such as STAT3, TAB1 and TAB2. Interacts with and phosphorylates a number of transcription factors including FOXO1, FOXO3, FOXO4, MYB, NOTCH1 and TCF7L2/TCF4. Interacts with DAPK3/ZIPK, and this interaction may disrupt interaction with transcription factors such as TCF7L2/TCF4. Forms a transcriptional repressor complex with CHD7, PPARG and SETDB1. Interacts with RNF138/NARF. Interacts with ATF5; the interaction stabilizes ATF5 at the protein level in a kinase-independent manner. The cofactor is Mg(2+). In terms of processing, phosphorylated on Thr-298. Intermolecular autophosphorylation on Thr-298 activates the enzyme.

It localises to the nucleus. The protein resides in the cytoplasm. It catalyses the reaction L-seryl-[protein] + ATP = O-phospho-L-seryl-[protein] + ADP + H(+). The catalysed reaction is L-threonyl-[protein] + ATP = O-phospho-L-threonyl-[protein] + ADP + H(+). With respect to regulation, activated by the non-canonical Wnt signaling pathway, in which WNT5A leads to activation of MAP3K7/TAK1 and HIPK2, which subsequently phosphorylates and activates this protein. Activated by dimerization and subsequent intermolecular autophosphorylation on Thr-298. Other cytokines such as IL6 may also activate this regulatory circuit. In terms of biological role, serine/threonine-protein kinase that regulates a number of transcription factors with key roles in cell fate determination. Positive effector of the non-canonical Wnt signaling pathway, acting downstream of WNT5A, MAP3K7/TAK1 and HIPK2. Negative regulator of the canonical Wnt/beta-catenin signaling pathway. Binds to and phosphorylates TCF7L2/TCF4 and LEF1, promoting the dissociation of the TCF7L2/LEF1/beta-catenin complex from DNA, as well as the ubiquitination and subsequent proteolysis of LEF1. Together these effects inhibit the transcriptional activation of canonical Wnt/beta-catenin target genes. Negative regulator of the Notch signaling pathway. Binds to and phosphorylates NOTCH1, thereby preventing the formation of a transcriptionally active ternary complex of NOTCH1, RBPJ/RBPSUH and MAML1. Negative regulator of the MYB family of transcription factors. Phosphorylation of MYB leads to its subsequent proteolysis while phosphorylation of MYBL1 and MYBL2 inhibits their interaction with the coactivator CREBBP. Other transcription factors may also be inhibited by direct phosphorylation of CREBBP itself. Acts downstream of IL6 and MAP3K7/TAK1 to phosphorylate STAT3, which is in turn required for activation of NLK by MAP3K7/TAK1. Upon IL1B stimulus, cooperates with ATF5 to activate the transactivation activity of C/EBP subfamily members. Phosphorylates ATF5 but also stabilizes ATF5 protein levels in a kinase-independent manner. Acts as an inhibitor of the mTORC1 complex in response to osmotic stress by mediating phosphorylation of RPTOR, thereby preventing recruitment of the mTORC1 complex to lysosomes. The protein is Serine/threonine-protein kinase NLK (NLK) of Canis lupus familiaris (Dog).